A 95-amino-acid polypeptide reads, in one-letter code: Aspartyl/glutamyl-tRNA(Asn/Gln) amidotransferase subunit C (95 aa).

Belongs to the GatC family. Heterotrimer of A, B and C subunits.

The enzyme catalyses L-glutamyl-tRNA(Gln) + L-glutamine + ATP + H2O = L-glutaminyl-tRNA(Gln) + L-glutamate + ADP + phosphate + H(+). The catalysed reaction is L-aspartyl-tRNA(Asn) + L-glutamine + ATP + H2O = L-asparaginyl-tRNA(Asn) + L-glutamate + ADP + phosphate + 2 H(+). Functionally, allows the formation of correctly charged Asn-tRNA(Asn) or Gln-tRNA(Gln) through the transamidation of misacylated Asp-tRNA(Asn) or Glu-tRNA(Gln) in organisms which lack either or both of asparaginyl-tRNA or glutaminyl-tRNA synthetases. The reaction takes place in the presence of glutamine and ATP through an activated phospho-Asp-tRNA(Asn) or phospho-Glu-tRNA(Gln). This Bartonella bacilliformis (strain ATCC 35685 / KC583 / Herrer 020/F12,63) protein is Aspartyl/glutamyl-tRNA(Asn/Gln) amidotransferase subunit C.